A 147-amino-acid chain; its full sequence is Hemoglobin subunit epsilon (147 aa).

The 145-residue stretch at 3–147 folds into the Globin domain; sequence HFTAEEKSTI…VATALAHKYH (145 aa). Phosphoserine is present on residues Ser14 and Ser51. The heme b site is built by His64 and His93.

Belongs to the globin family. In terms of assembly, heterotetramer of two alpha chains and two epsilon chains in early embryonic hemoglobin Gower-2; two zeta chains and two epsilon chains in early embryonic hemoglobin Gower-1. As to expression, red blood cells.

In terms of biological role, the epsilon chain is a beta-type chain of early mammalian embryonic hemoglobin. In Propithecus verreauxi (White sifaka), this protein is Hemoglobin subunit epsilon (HBE1).